Here is a 140-residue protein sequence, read N- to C-terminus: Nucleoside diphosphate kinase (140 aa).

Residues lysine 11, phenylalanine 59, arginine 87, threonine 93, arginine 104, and asparagine 114 each contribute to the ATP site. Catalysis depends on histidine 117, which acts as the Pros-phosphohistidine intermediate.

It belongs to the NDK family. As to quaternary structure, homotetramer. It depends on Mg(2+) as a cofactor.

It localises to the cytoplasm. It catalyses the reaction a 2'-deoxyribonucleoside 5'-diphosphate + ATP = a 2'-deoxyribonucleoside 5'-triphosphate + ADP. The enzyme catalyses a ribonucleoside 5'-diphosphate + ATP = a ribonucleoside 5'-triphosphate + ADP. In terms of biological role, major role in the synthesis of nucleoside triphosphates other than ATP. The ATP gamma phosphate is transferred to the NDP beta phosphate via a ping-pong mechanism, using a phosphorylated active-site intermediate. The protein is Nucleoside diphosphate kinase of Rhizobium etli (strain CIAT 652).